A 455-amino-acid chain; its full sequence is MSLDIVILAAGQGTRMRSALPKVLHPVAGNSMLGHVIHSARQLQPQGIHVVIGHGAELVRERLAADDLNFVMQDKQLGTGHAVAQALPALTADTVLVLYGDVPLIEVETLQRLLAKASDQQLGLLTVTLEDPTGYGRIVRDEQGQVTAIVEHKDANDAQKAIKEGNTGILALPAARLADWMGRLSNNNAQGEYYLTDVIAMAVADGLVVATEQPHDPMEVQGANDRRQLSELERHYQLREGRRLMAQGVTLRDPARFDVRGEVTVGRDVLIDINVILEGKVVIEDDVQIGPNCVIKNTTLRKGAVVKANSHLEGAVMGEGSDAGPFARLRPGSVLDAKAHVGNFVELKNAHLGEGAKVGHLTYLGDAEIGARTNIGAGTITCNYDGANKFKTVMGEDVFIGSNNSLVAPVEIKAGATTAAGSTITQTVEAGDLAVARARQRNISGWKRPEKTKKS.

Residues 1–226 (MSLDIVILAA…PMEVQGANDR (226 aa)) form a pyrophosphorylase region. Residues 8-11 (LAAG), lysine 22, glutamine 73, 78-79 (GT), 99-101 (YGD), glycine 136, glutamate 151, asparagine 166, and asparagine 224 each bind UDP-N-acetyl-alpha-D-glucosamine. Aspartate 101 is a Mg(2+) binding site. Asparagine 224 contributes to the Mg(2+) binding site. Positions 227–247 (RQLSELERHYQLREGRRLMAQ) are linker. Positions 248 to 455 (GVTLRDPARF…WKRPEKTKKS (208 aa)) are N-acetyltransferase. The UDP-N-acetyl-alpha-D-glucosamine site is built by arginine 330 and lysine 348. Histidine 360 (proton acceptor) is an active-site residue. UDP-N-acetyl-alpha-D-glucosamine contacts are provided by tyrosine 363 and asparagine 374. Acetyl-CoA is bound by residues alanine 377, 383 to 384 (NY), serine 402, alanine 420, and arginine 437.

This sequence in the N-terminal section; belongs to the N-acetylglucosamine-1-phosphate uridyltransferase family. It in the C-terminal section; belongs to the transferase hexapeptide repeat family. In terms of assembly, homotrimer. Mg(2+) is required as a cofactor.

It localises to the cytoplasm. It catalyses the reaction alpha-D-glucosamine 1-phosphate + acetyl-CoA = N-acetyl-alpha-D-glucosamine 1-phosphate + CoA + H(+). It carries out the reaction N-acetyl-alpha-D-glucosamine 1-phosphate + UTP + H(+) = UDP-N-acetyl-alpha-D-glucosamine + diphosphate. The protein operates within nucleotide-sugar biosynthesis; UDP-N-acetyl-alpha-D-glucosamine biosynthesis; N-acetyl-alpha-D-glucosamine 1-phosphate from alpha-D-glucosamine 6-phosphate (route II): step 2/2. Its pathway is nucleotide-sugar biosynthesis; UDP-N-acetyl-alpha-D-glucosamine biosynthesis; UDP-N-acetyl-alpha-D-glucosamine from N-acetyl-alpha-D-glucosamine 1-phosphate: step 1/1. It participates in bacterial outer membrane biogenesis; LPS lipid A biosynthesis. Catalyzes the last two sequential reactions in the de novo biosynthetic pathway for UDP-N-acetylglucosamine (UDP-GlcNAc). The C-terminal domain catalyzes the transfer of acetyl group from acetyl coenzyme A to glucosamine-1-phosphate (GlcN-1-P) to produce N-acetylglucosamine-1-phosphate (GlcNAc-1-P), which is converted into UDP-GlcNAc by the transfer of uridine 5-monophosphate (from uridine 5-triphosphate), a reaction catalyzed by the N-terminal domain. This is Bifunctional protein GlmU from Pseudomonas putida (strain GB-1).